Reading from the N-terminus, the 69-residue chain is Conotoxin Fr3.1 (69 aa).

An N-terminal signal peptide occupies residues 1–20 (MLKTGVLLLIFLVLFPLATL). The propeptide occupies 21–51 (QDADQPVERNVENKQDLNLDKRRGMKLLAQR). Gln-52 bears the Pyrrolidone carboxylic acid mark. Glu-54 is modified (4-carboxyglutamate). Position 58 is a 4-hydroxyproline (Pro-58).

Belongs to the conotoxin M superfamily. In terms of tissue distribution, expressed by the venom duct.

The protein localises to the secreted. Probable toxin. The protein is Conotoxin Fr3.1 of Conus frigidus (Frigid cone).